A 383-amino-acid polypeptide reads, in one-letter code: Neuropeptide Y receptor type 1 (383 aa).

Residues 1-44 lie on the Extracellular side of the membrane; that stretch reads MNSTLSSQVENHSIYYNFSEKNSQFLAFENDDCHLPLAMIFTLA. Residues N2, N11, and N17 are each glycosylated (N-linked (GlcNAc...) asparagine). A helical membrane pass occupies residues 45–65; sequence LAYGAVIILGVSGNLALIIII. The Cytoplasmic segment spans residues 66–76; that stretch reads LKQKEMRNVTN. The helical transmembrane segment at 77–97 threads the bilayer; sequence ILIVNLSFSDLLVAIMCLPFT. Residues 98–116 are Extracellular-facing; that stretch reads FVYTLMDHWVFGEVMCKLN. C113 and C198 form a disulfide bridge. Residues 117–137 traverse the membrane as a helical segment; sequence PFVQCVSITVSIFSLVLIAVE. Residues 138–154 lie on the Cytoplasmic side of the membrane; the sequence is RHQLIINPRGWRPSNRH. A helical transmembrane segment spans residues 155-175; it reads AYVGIAVIWVLAVASSLPFLI. At 176-211 the chain is on the extracellular side; the sequence is YQVLTDEPFQNVTLDAFKDKYVCFDKFLSDSHRLSY. A helical membrane pass occupies residues 212 to 232; it reads TTLLLVLQYFGPLCFIFICYF. Over 233–260 the chain is Cytoplasmic; the sequence is KIYIRLKRRNNMMDKMRDNKYRSSETKR. A helical membrane pass occupies residues 261-281; sequence INVMLLSIVVAFAVCWLPLTI. Residues 282-299 lie on the Extracellular side of the membrane; sequence FNTVFDWNHQIIATCNHN. Residues 300–320 traverse the membrane as a helical segment; the sequence is LLFLLCHLTAMISTCINPIFY. Residues 321-383 lie on the Cytoplasmic side of the membrane; it reads GFLNKNFQRD…KIHSDDNEKI (63 aa). The S-palmitoyl cysteine moiety is linked to residue C338. A Phosphoserine modification is found at S368.

Belongs to the G-protein coupled receptor 1 family.

The protein localises to the cell membrane. Receptor for neuropeptide Y and peptide YY. This chain is Neuropeptide Y receptor type 1 (NPY1R), found in Sus scrofa (Pig).